A 582-amino-acid polypeptide reads, in one-letter code: Frizzled-10 (582 aa).

The signal sequence occupies residues 1–21 (MQHPGPRLWLVLQVMIGSCTA). Residues 22-226 (ISSMDLERPG…DVYWSRDDKR (205 aa)) are Extracellular-facing. Residues 30-151 (PGDGKCQPVE…NDPNYLCMEA (122 aa)) enclose the FZ domain. Cystine bridges form between cysteine 35–cysteine 96, cysteine 43–cysteine 89, cysteine 80–cysteine 118, cysteine 107–cysteine 148, and cysteine 111–cysteine 135. The N-linked (GlcNAc...) asparagine glycan is linked to asparagine 49. A disordered region spans residues 153–189 (NNGSDEPSRGSGMFPPLFRPQRPHSAQEHPLKDGGPG). Asparagine 154 is a glycosylation site (N-linked (GlcNAc...) asparagine). Residues 227–247 (FAVVWLAIWSVLCFFSSAFTV) form a helical membrane-spanning segment. Over 248-263 (LTFLIDPSRFRYPERP) the chain is Cytoplasmic. The helical transmembrane segment at 264–284 (IIFLSMCYCVYSVGYIIRLFA) threads the bilayer. At 285-312 (GAESIACDRDSGQLYVIQEGLESTGCTL) the chain is on the extracellular side. A helical transmembrane segment spans residues 313 to 333 (VFLVLYYFGMASSLWWVVLTL). Over 334 to 352 (TWFLAAGKKWGHEAIEANS) the chain is Cytoplasmic. A helical membrane pass occupies residues 353–373 (SYFHLAAWAIPAVKTILILVM). Over 374–394 (RRVAGDELTGVCYVGSMDVNA) the chain is Extracellular. A helical membrane pass occupies residues 395–415 (LTGFVLVPLACYLVIGTSFIL). At 416 to 444 (SGFVALFHIRRVMKTGGENTDKLEKLMVR) the chain is on the cytoplasmic side. A helical membrane pass occupies residues 445 to 465 (IGVFSLLYTVPATCVIACYFY). Residues 466 to 503 (ERLNMDYWKMLATQHKCKMNNQTKTPDCLMTTSIPAVE) are Extracellular-facing. The N-linked (GlcNAc...) asparagine glycan is linked to asparagine 486. Residues 504-524 (VFMVKVSMLLVVGITSGVWVW) traverse the membrane as a helical segment. Over 525–582 (TSKTLQSWQHVCSRGLKRKSRRKPASVVTSAGIYKKAQHPQKPHLGKYELPAQPSACV) the chain is Cytoplasmic. The short motif at 527 to 532 (KTLQSW) is the Lys-Thr-X-X-X-Trp motif, mediates interaction with the PDZ domain of Dvl family members element. The disordered stretch occupies residues 561 to 582 (AQHPQKPHLGKYELPAQPSACV). The PDZ-binding motif lies at 580–582 (ACV).

This sequence belongs to the G-protein coupled receptor Fz/Smo family. In terms of assembly, interacts with MYOC. Interacts with WNT7B. Post-translationally, ubiquitinated by ZNRF3, leading to its degradation by the proteasome.

The protein resides in the cell membrane. Receptor for Wnt proteins. Functions in the canonical Wnt/beta-catenin signaling pathway. The canonical Wnt/beta-catenin signaling pathway leads to the activation of disheveled proteins, inhibition of GSK-3 kinase, nuclear accumulation of beta-catenin and activation of Wnt target genes. A second signaling pathway involving PKC and calcium fluxes has been seen for some family members, but it is not yet clear if it represents a distinct pathway or if it can be integrated in the canonical pathway, as PKC seems to be required for Wnt-mediated inactivation of GSK-3 kinase. Both pathways seem to involve interactions with G-proteins. May be involved in transduction and intercellular transmission of polarity information during tissue morphogenesis and/or in differentiated tissues. In Mus musculus (Mouse), this protein is Frizzled-10 (Fzd10).